Consider the following 175-residue polypeptide: MIAKVVYPRYAVIRLRGIPTTPRDIAATLDLLRLRRKFTMTVVVGSPDVLGMIEKANDWITWGEIDANTLAEVLKRRGRLVGDRPLTLEHLQRWGWRSFEEVALAFVAGEIDRLSCGRKVPAREGQRAPCIPYLKPFFRLHPPRGGLNSLKLHFSVGGDLGYRGPLINDLIRRML.

It belongs to the universal ribosomal protein uL30 family. In terms of assembly, part of the 50S ribosomal subunit.

This Pyrobaculum neutrophilum (strain DSM 2338 / JCM 9278 / NBRC 100436 / V24Sta) (Thermoproteus neutrophilus) protein is Large ribosomal subunit protein uL30.